Consider the following 512-residue polypeptide: Probable multidrug resistance protein EmrY (512 aa).

Residues 1-8 are Cytoplasmic-facing; sequence MAITKSTP. The chain crosses the membrane as a helical span at residues 9–29; the sequence is APLTGGTLWCVTIALSLATFM. Glutamine 30 is a topological domain (periplasmic). Residues 31 to 51 form a helical membrane-spanning segment; the sequence is MLDSTISNVAIPTISGFLGAS. Topologically, residues 52-53 are cytoplasmic; the sequence is TD. The chain crosses the membrane as a helical span at residues 54-74; it reads EGTWVITSFGVANAIAIPVTG. The Periplasmic portion of the chain corresponds to 75–84; that stretch reads RLAQRIGELR. A run of 2 helical transmembrane segments spans residues 85–105 and 106–126; these read LFLL…LSTN and LDVL…LIPL. At 127 to 141 the chain is on the periplasmic side; sequence SQSLLLRNYPPEKRT. A helical membrane pass occupies residues 142 to 162; it reads FALALWSMTVIIAPICGPILG. The Cytoplasmic portion of the chain corresponds to 163 to 172; it reads GYICDNFSWG. A helical transmembrane segment spans residues 173-193; the sequence is WIFLINVPMGIIVLTLCLTLL. Over 194–204 the chain is Periplasmic; it reads KGRETETSPVK. The chain crosses the membrane as a helical span at residues 205-225; it reads MNLPGLTLLVLGVGGLQIMLD. At 226-234 the chain is on the cytoplasmic side; it reads KGRDLDWFN. The helical transmembrane segment at 235 to 255 threads the bilayer; the sequence is SSTIIILTVVSVISLISLVIW. At 256-273 the chain is on the periplasmic side; the sequence is ESTSENPILDLSLFKSRN. The chain crosses the membrane as a helical span at residues 274–294; that stretch reads FTIGIVSITCAYLFYSGAIVL. The Cytoplasmic segment spans residues 295 to 307; it reads MPQLLQETMGYNA. Residues 308–328 form a helical membrane-spanning segment; it reads IWAGLAYAPIGIMPLLISPLI. At 329–338 the chain is on the periplasmic side; that stretch reads GRYGNKIDMR. The chain crosses the membrane as a helical span at residues 339–359; that stretch reads LLVTFSFLMYAVCYYWRSVTF. The Cytoplasmic portion of the chain corresponds to 360–364; that stretch reads MPTID. Residues 365-385 form a helical membrane-spanning segment; that stretch reads FTGIILPQFFQGFAVACFFLP. Residues 386–486 lie on the Periplasmic side of the membrane; that stretch reads LTTISFSGLP…LSISANEIFR (101 aa). Residues 487 to 507 traverse the membrane as a helical segment; the sequence is MAAIAFILLTVLVWFAKPPFT. Over 508 to 512 the chain is Cytoplasmic; that stretch reads AKGVG.

It belongs to the major facilitator superfamily. EmrB family. Part of the tripartite efflux system EmrYK-TolC, which is composed of an inner membrane transporter, EmrY, a membrane fusion protein, EmrK, and an outer membrane component, TolC. The complex forms a large protein conduit and can translocate molecules across both the inner and outer membranes.

The protein localises to the cell inner membrane. Part of the tripartite efflux system EmrYK-TolC, which confers resistance to various drugs. The protein is Probable multidrug resistance protein EmrY (emrY) of Escherichia coli (strain K12).